Here is a 246-residue protein sequence, read N- to C-terminus: ATP synthase subunit a (246 aa).

5 helical membrane-spanning segments follow: residues 34–54, 92–112, 130–150, 155–175, and 196–216; these read GQTMITTWVVMLLLIGLTFIG, WVPLIGTIFLFVLFANWLGQL, DINTTVALSLIALVSYIYAGL, FGYFKHYFESPILAAVWVLEF, and VVAVLILLVPILVPVPLMILF.

Belongs to the ATPase A chain family. In terms of assembly, F-type ATPases have 2 components, CF(1) - the catalytic core - and CF(0) - the membrane proton channel. CF(1) has five subunits: alpha(3), beta(3), gamma(1), delta(1), epsilon(1). CF(0) has four main subunits: a, b, b' and c.

The protein resides in the cell inner membrane. In terms of biological role, key component of the proton channel; it plays a direct role in the translocation of protons across the membrane. The protein is ATP synthase subunit a of Gloeobacter violaceus (strain ATCC 29082 / PCC 7421).